The primary structure comprises 85 residues: Small cysteine and glycine repeat-containing protein 5 (85 aa).

Residues 4–69 (CGCGGCGGCG…TCCSCGCGCG (66 aa)) form a 10 X 2 AA repeats of CG region.

It belongs to the KRTAP type 28 family.

Its function is as follows. In the hair cortex, hair keratin intermediate filaments are embedded in an interfilamentous matrix, consisting of hair keratin-associated proteins (KRTAP), which are essential for the formation of a rigid and resistant hair shaft through their extensive disulfide bond cross-linking with abundant cysteine residues of hair keratins. The matrix proteins include the high-sulfur and high-glycine-tyrosine keratins. The sequence is that of Small cysteine and glycine repeat-containing protein 5 from Homo sapiens (Human).